The primary structure comprises 346 residues: Heat-inducible transcription repressor HrcA (346 aa).

Belongs to the HrcA family.

Its function is as follows. Negative regulator of class I heat shock genes (grpE-dnaK-dnaJ and groELS operons). Prevents heat-shock induction of these operons. The sequence is that of Heat-inducible transcription repressor HrcA from Fructilactobacillus sanfranciscensis (Lactobacillus sanfranciscensis).